The sequence spans 369 residues: Transmembrane protein 144 homolog A (369 aa).

10 helical membrane-spanning segments follow: residues 6–26 (VIGY…YVPV), 35–55 (LSYA…AMMI), 63–83 (PIGI…IPII), 85–105 (LVGL…VGFF), 122–142 (DWMN…FFFI), 221–241 (VAGI…MIPM), 256–276 (IIFS…MFYA), 288–308 (TVFP…GLMI), 318–338 (GYPI…VFYF), and 347–367 (LLIL…LAFS).

Belongs to the TMEM144 family.

It is found in the membrane. The sequence is that of Transmembrane protein 144 homolog A (tmem144A) from Dictyostelium discoideum (Social amoeba).